The sequence spans 161 residues: Cyclic pyranopterin monophosphate synthase (161 aa).

Substrate is bound by residues 75–77 (LCH) and 113–114 (ME). The active site involves aspartate 128.

Belongs to the MoaC family. As to quaternary structure, homohexamer; trimer of dimers.

It carries out the reaction (8S)-3',8-cyclo-7,8-dihydroguanosine 5'-triphosphate = cyclic pyranopterin phosphate + diphosphate. Its pathway is cofactor biosynthesis; molybdopterin biosynthesis. Catalyzes the conversion of (8S)-3',8-cyclo-7,8-dihydroguanosine 5'-triphosphate to cyclic pyranopterin monophosphate (cPMP). The polypeptide is Cyclic pyranopterin monophosphate synthase (Salmonella arizonae (strain ATCC BAA-731 / CDC346-86 / RSK2980)).